The chain runs to 342 residues: MTDISERNKLILEAIIEDYITTAEPVGSRAVTKRHGLTLSPATVRNVMADLEEMGYLVSPHTSAGRVPTDKAYRLYVDSLLAVRRIDKVERERIRKRYAEAGRDIGAVLHETSRLLSSVSHYTGIVLAPRFSATIFRHIEFVKLGGRRILVILVADNGTVQNRLIESDEEFSSEELIRMSNYLNELLVGVPVGQVRTRILEEMRNEKVLYDKLLARALQLSEQSLNDDGAQIFIEGQTNILEQPEFADSRRMRDLFRAFEEKNQLVGLLDRCLNAQGVQIFIGAETHLSQMEGLSIITSTYLTGKNTLGVLGVIGPTRMGYAKVIPIVDYTAKLVSRLLEGE.

The protein belongs to the HrcA family.

Negative regulator of class I heat shock genes (grpE-dnaK-dnaJ and groELS operons). Prevents heat-shock induction of these operons. The polypeptide is Heat-inducible transcription repressor HrcA (Geobacter sulfurreducens (strain ATCC 51573 / DSM 12127 / PCA)).